Consider the following 536-residue polypeptide: Phosphoenolpyruvate carboxykinase (ATP) (536 aa).

Positions 61, 195, and 201 each coordinate substrate. ATP-binding positions include Lys-201, His-220, and 236 to 244 (GLSGTGKTT). Mn(2+)-binding residues include Lys-201 and His-220. Mn(2+) is bound at residue Asp-257. ATP contacts are provided by Glu-285, Arg-322, and Thr-447. Arg-322 contacts substrate.

The protein belongs to the phosphoenolpyruvate carboxykinase (ATP) family. The cofactor is Mn(2+).

The protein localises to the cytoplasm. It carries out the reaction oxaloacetate + ATP = phosphoenolpyruvate + ADP + CO2. It participates in carbohydrate biosynthesis; gluconeogenesis. Functionally, involved in the gluconeogenesis. Catalyzes the conversion of oxaloacetate (OAA) to phosphoenolpyruvate (PEP) through direct phosphoryl transfer between the nucleoside triphosphate and OAA. The sequence is that of Phosphoenolpyruvate carboxykinase (ATP) from Brucella melitensis biotype 1 (strain ATCC 23456 / CCUG 17765 / NCTC 10094 / 16M).